The sequence spans 304 residues: Aspartate carbamoyltransferase catalytic subunit (304 aa).

Carbamoyl phosphate contacts are provided by Arg-49 and Thr-50. Lys-77 provides a ligand contact to L-aspartate. 3 residues coordinate carbamoyl phosphate: Arg-99, His-127, and Gln-130. Arg-160 and Arg-211 together coordinate L-aspartate. Positions 252 and 253 each coordinate carbamoyl phosphate.

This sequence belongs to the aspartate/ornithine carbamoyltransferase superfamily. ATCase family. As to quaternary structure, heterododecamer (2C3:3R2) of six catalytic PyrB chains organized as two trimers (C3), and six regulatory PyrI chains organized as three dimers (R2).

The enzyme catalyses carbamoyl phosphate + L-aspartate = N-carbamoyl-L-aspartate + phosphate + H(+). The protein operates within pyrimidine metabolism; UMP biosynthesis via de novo pathway; (S)-dihydroorotate from bicarbonate: step 2/3. Catalyzes the condensation of carbamoyl phosphate and aspartate to form carbamoyl aspartate and inorganic phosphate, the committed step in the de novo pyrimidine nucleotide biosynthesis pathway. The sequence is that of Aspartate carbamoyltransferase catalytic subunit from Bacillus cereus (strain ATCC 10987 / NRS 248).